The chain runs to 105 residues: Cyclotide vibi-E (105 aa).

The signal sequence occupies residues 1–9 (AAFALPALA). A propeptide spanning residues 10 to 69 (SSFEKDVISFRAIQAVLEKRGLSKLEDDPVLSALAHTKTIISNPVIEEALLNGANLKAGN) is cleaved from the precursor. Residues 70–99 (GIPCAESCVWIPCTVTALIGCGCSNKVCYN) constitute a cross-link (cyclopeptide (Gly-Asn)). 3 cysteine pairs are disulfide-bonded: cysteine 73–cysteine 90, cysteine 77–cysteine 92, and cysteine 82–cysteine 97. Positions 100–105 (SLQTKY) are excised as a propeptide.

Post-translationally, this is a cyclic peptide.

Its function is as follows. Probably participates in a plant defense mechanism. Has cytotoxic activity, active against a human lymphoma cell line with an IC(50) of 3.2 uM. In Viola biflora (Yellow wood violet), this protein is Cyclotide vibi-E.